We begin with the raw amino-acid sequence, 176 residues long: Small ribosomal subunit protein uS5 (176 aa).

The S5 DRBM domain maps to 11–74 (LSEVLVDVNR…QAAKKRMMKV (64 aa)).

The protein belongs to the universal ribosomal protein uS5 family. As to quaternary structure, part of the 30S ribosomal subunit. Contacts proteins S4 and S8.

Its function is as follows. With S4 and S12 plays an important role in translational accuracy. Located at the back of the 30S subunit body where it stabilizes the conformation of the head with respect to the body. This Rickettsia akari (strain Hartford) protein is Small ribosomal subunit protein uS5.